Reading from the N-terminus, the 391-residue chain is Elongation factor Tu (391 aa).

The region spanning 10 to 201 (KPHVNIGTIG…AVDDYIPTPA (192 aa)) is the tr-type G domain. Residues 19–26 (GHVDHGKT) form a G1 region. 19–26 (GHVDHGKT) serves as a coordination point for GTP. T26 contacts Mg(2+). A G2 region spans residues 55 to 59 (GITIS). Residues 76-79 (DCPG) are G3. GTP-binding positions include 76-80 (DCPGH) and 131-134 (NKVD). The G4 stretch occupies residues 131–134 (NKVD). Residues 169 to 171 (SAL) form a G5 region.

Belongs to the TRAFAC class translation factor GTPase superfamily. Classic translation factor GTPase family. EF-Tu/EF-1A subfamily. In terms of assembly, monomer.

Its subcellular location is the cytoplasm. It carries out the reaction GTP + H2O = GDP + phosphate + H(+). In terms of biological role, GTP hydrolase that promotes the GTP-dependent binding of aminoacyl-tRNA to the A-site of ribosomes during protein biosynthesis. The sequence is that of Elongation factor Tu from Dinoroseobacter shibae (strain DSM 16493 / NCIMB 14021 / DFL 12).